A 145-amino-acid chain; its full sequence is Pleckstrin homology domain-containing protein 1 (145 aa).

Positions 26-127 (NPERSGWLTK…WINSIGRSIV (102 aa)) constitute a PH domain. The interval 29–53 (RSGWLTKQGDYIKTWRRRWFVLKRG) is binds specifically PtdIns3P.

Binds PtdIns3P. In terms of tissue distribution, ubiquitously expressed.

The protein resides in the cytoplasm. Binds specifically to phosphatidylinositol 3-phosphate (PtdIns3P), but not to other phosphoinositides. In Arabidopsis thaliana (Mouse-ear cress), this protein is Pleckstrin homology domain-containing protein 1 (PH1).